The sequence spans 285 residues: Elongation factor Ts (285 aa).

The tract at residues 75–78 (TDFV) is involved in Mg(2+) ion dislocation from EF-Tu.

The protein belongs to the EF-Ts family.

The protein localises to the cytoplasm. In terms of biological role, associates with the EF-Tu.GDP complex and induces the exchange of GDP to GTP. It remains bound to the aminoacyl-tRNA.EF-Tu.GTP complex up to the GTP hydrolysis stage on the ribosome. The protein is Elongation factor Ts of Alcanivorax borkumensis (strain ATCC 700651 / DSM 11573 / NCIMB 13689 / SK2).